The sequence spans 94 residues: DNA-directed RNA polymerase subunit Rpo11 (94 aa).

The protein belongs to the archaeal Rpo11/eukaryotic RPB11/RPC19 RNA polymerase subunit family. Part of the RNA polymerase complex.

The protein localises to the cytoplasm. It carries out the reaction RNA(n) + a ribonucleoside 5'-triphosphate = RNA(n+1) + diphosphate. Functionally, DNA-dependent RNA polymerase (RNAP) catalyzes the transcription of DNA into RNA using the four ribonucleoside triphosphates as substrates. This is DNA-directed RNA polymerase subunit Rpo11 from Haloarcula marismortui (strain ATCC 43049 / DSM 3752 / JCM 8966 / VKM B-1809) (Halobacterium marismortui).